A 116-amino-acid chain; its full sequence is Large ribosomal subunit protein bL20 (116 aa).

This sequence belongs to the bacterial ribosomal protein bL20 family.

Functionally, binds directly to 23S ribosomal RNA and is necessary for the in vitro assembly process of the 50S ribosomal subunit. It is not involved in the protein synthesizing functions of that subunit. The protein is Large ribosomal subunit protein bL20 of Helicobacter pylori (strain HPAG1).